Reading from the N-terminus, the 200-residue chain is Integrin beta-1-binding protein 1 (200 aa).

The span at Met-1 to Ser-10 shows a compositional bias: basic residues. The disordered stretch occupies residues Met-1–Asn-56. The short motif at Lys-6–Lys-7 is the Nuclear localization signal element. The segment covering Ser-11 to Ser-29 has biased composition (low complexity). The segment covering Ser-34 to Asn-56 has biased composition (polar residues). At Thr-38 the chain carries Phosphothreonine; by CaMK2. Residue Ser-41 is modified to Phosphoserine. Residues Asp-58–Pro-200 form the PID domain. The interaction with KRIT1 stretch occupies residues Tyr-136 to Ile-139. Residues Ile-139–Met-141 are interaction with ITGB1.

As to quaternary structure, interacts (via N-terminus and PTB domain) with ROCK1. Found in a complex, at least composed of ITGB1BP1, KRIT1 and RAP1A. Interacts (via C-terminal region) with ITGB1 (via C-terminal cytoplasmic tail); the interaction prevents talin TLN1 binding to ITGB1 and KRIT1 and ITGB1 compete for the same binding site. Interacts with KRIT1 (via N-terminal NPXY motif); the interaction induces the opening conformation of KRIT1 and KRIT1 and ITGB1 compete for the same binding site. Isoform 2 does not interact with ITGB1. Interacts with CDC42 (GTP- or GDP-bound form); the interaction is increased with the CDC42-membrane bound forms and prevents both CDC42 activation and cell spreading. Interacts (via C-terminal domain region) with NME2. Interacts with FERMT2 and RAC1. Post-translationally, phosphorylation at Thr-38 seems to enhance integrin alpha5beta1-mediated cell adhesion. The degree of phosphorylation is regulated by integrin-dependent cell-matrix interaction.

Its subcellular location is the nucleus. It is found in the cytoplasm. The protein localises to the cytoskeleton. It localises to the cell membrane. The protein resides in the cell projection. Its subcellular location is the lamellipodium. It is found in the ruffle. In terms of biological role, key regulator of the integrin-mediated cell-matrix interaction signaling by binding to the ITGB1 cytoplasmic tail and preventing the activation of integrin alpha-5/beta-1 (heterodimer of ITGA5 and ITGB1) by talin or FERMT1. Plays a role in cell proliferation, differentiation, spreading, adhesion and migration in the context of mineralization and bone development and angiogenesis. Stimulates cellular proliferation in a fibronectin-dependent manner. Involved in the regulation of beta-1 integrin-containing focal adhesion (FA) site dynamics by controlling its assembly rate during cell adhesion; inhibits beta-1 integrin clustering within FA by directly competing with talin TLN1, and hence stimulates osteoblast spreading and migration in a fibronectin- and/or collagen-dependent manner. Acts as a guanine nucleotide dissociation inhibitor (GDI) by regulating Rho family GTPases during integrin-mediated cell matrix adhesion; reduces the level of active GTP-bound form of both CDC42 and RAC1 GTPases upon cell adhesion to fibronectin. Stimulates the release of active CDC42 from the membranes to maintain it in an inactive cytoplasmic pool. Participates in the translocation of the Rho-associated protein kinase ROCK1 to membrane ruffles at cell leading edges of the cell membrane, leading to an increase of myoblast cell migration on laminin. Plays a role in bone mineralization at a late stage of osteoblast differentiation; modulates the dynamic formation of focal adhesions into fibrillar adhesions, which are adhesive structures responsible for fibronectin deposition and fibrillogenesis. Plays a role in blood vessel development; acts as a negative regulator of angiogenesis by attenuating endothelial cell proliferation and migration, lumen formation and sprouting angiogenesis by promoting AKT phosphorylation and inhibiting ERK1/2 phosphorylation through activation of the Notch signaling pathway. Promotes transcriptional activity of the MYC promoter. The polypeptide is Integrin beta-1-binding protein 1 (ITGB1BP1) (Bos taurus (Bovine)).